Consider the following 1357-residue polypeptide: DNA-directed RNA polymerase subunit beta (1357 aa).

It belongs to the RNA polymerase beta chain family. As to quaternary structure, the RNAP catalytic core consists of 2 alpha, 1 beta, 1 beta' and 1 omega subunit. When a sigma factor is associated with the core the holoenzyme is formed, which can initiate transcription.

The catalysed reaction is RNA(n) + a ribonucleoside 5'-triphosphate = RNA(n+1) + diphosphate. Functionally, DNA-dependent RNA polymerase catalyzes the transcription of DNA into RNA using the four ribonucleoside triphosphates as substrates. This chain is DNA-directed RNA polymerase subunit beta, found in Pseudomonas paraeruginosa (strain DSM 24068 / PA7) (Pseudomonas aeruginosa (strain PA7)).